A 106-amino-acid chain; its full sequence is MNDSEFHRLADQLWLTIEEHLDDWGGDSDIDCEINGGVLTITFENGSKIIINRQEPLHQVWLATKQGGYHFDLKGDEWICDRSGETFWDLLEQAATQQAGETVSFR.

Belongs to the frataxin family.

In terms of biological role, involved in iron-sulfur (Fe-S) cluster assembly. May act as a regulator of Fe-S biogenesis. This Escherichia coli O6:H1 (strain CFT073 / ATCC 700928 / UPEC) protein is Iron-sulfur cluster assembly protein CyaY.